The primary structure comprises 331 residues: Tryptophan--tRNA ligase (331 aa).

Residues 10–12 (QPS) and 18–19 (GN) contribute to the ATP site. The short motif at 11 to 19 (PSGQLTLGN) is the 'HIGH' region element. Aspartate 133 is an L-tryptophan binding site. ATP contacts are provided by residues 145–147 (GED), valine 184, and 193–197 (KMSKS). Residues 193–197 (KMSKS) carry the 'KMSKS' region motif.

This sequence belongs to the class-I aminoacyl-tRNA synthetase family. Homodimer.

The protein resides in the cytoplasm. It catalyses the reaction tRNA(Trp) + L-tryptophan + ATP = L-tryptophyl-tRNA(Trp) + AMP + diphosphate + H(+). Functionally, catalyzes the attachment of tryptophan to tRNA(Trp). The chain is Tryptophan--tRNA ligase from Listeria monocytogenes serovar 1/2a (strain ATCC BAA-679 / EGD-e).